The chain runs to 116 residues: Somatostatin (116 aa).

A signal peptide spans 1-24 (MLSCRLQCALAALSIVLALGGVTG). Residues 25 to 88 (APSDPRLRQF…QDEMRLELQR (64 aa)) constitute a propeptide that is removed on maturation. Residue Ala43 is modified to Alanine amide. The tract at residues 62–99 (QTENDALEPEDLSQAAEQDEMRLELQRSANSNPAMAPR) is disordered. The cysteines at positions 105 and 116 are disulfide-linked.

The protein belongs to the somatostatin family. C-terminal amidation of the neuronostatin peptide is required for its biological activity, including for the regulation of mean arterial pressure. In terms of tissue distribution, expressed in the pancreas and the spleen (at protein level).

It localises to the secreted. Its function is as follows. Inhibits the secretion of pituitary hormones, including that of growth hormone/somatotropin (GH1), PRL, ACTH, luteinizing hormone (LH) and TSH. Also impairs ghrelin- and GnRH-stimulated secretion of GH1 and LH; the inhibition of ghrelin-stimulated secretion of GH1 can be further increased by neuronostatin. In terms of biological role, may enhance low-glucose-induced glucagon release by pancreatic alpha cells. This effect may be mediated by binding to GPR107 and PKA activation. May regulate cardiac contractile function. May compromise cardiomyocyte viability. In the central nervous system, may impair memory retention and may affect hippocampal excitability. May also have anxiolytic and anorexigenic effects. May play a role in arterial pressure regulation. May inhibit basal, but not ghrelin- or GnRH-stimulated secretion of GH1 or LH, but does not affect the release of other pituitary hormones, including PRL, ACTH, FSH or TSH. Potentiates inhibitory action of somatostatin on ghrelin-stimulated secretion of GH1, but not that on GnRH-stimulated secretion of LH. In Sus scrofa (Pig), this protein is Somatostatin (SST).